Here is a 2621-residue protein sequence, read N- to C-terminus: Nonribosomal peptide synthetase dtpA (2621 aa).

Positions 446-844 (CMEQPNAEAI…GRKDQQVKIR (399 aa)) are adenylation 1. The region spanning 978–1054 (QPYTQVEETL…EVALYSRALS (77 aa)) is the Carrier 1 domain. O-(pantetheine 4'-phosphoryl)serine is present on serine 1015. Residues 1095–1506 (EDIYPCTALQ…LNQLELAGPQ (412 aa)) are condensation 1. Positions 1534 to 1930 (SRTQPGASAI…GRRDNQVKLR (397 aa)) are adenylation 2. Residues 2071-2147 (QPSTTQEALV…LFCTNASTSI (77 aa)) form the Carrier 2 domain. Serine 2108 is modified (O-(pantetheine 4'-phosphoryl)serine). Positions 2220-2618 (AIFKLHGSKV…HSARPIASID (399 aa)) are condensation 2.

This sequence belongs to the NRP synthetase family.

Its pathway is alkaloid biosynthesis. In terms of biological role, nonribosomal peptide synthetase; part of the gene cluster that mediates the biosynthesis of the dimeric diketopiperazine alkaloid ditryptophenaline. The nonribosomal peptide synthase dtpA accepts L-tryptophan and L-phenylalanine as its substrates and forms the phenylalanyl-tryptophanyl cyclic dipeptide product cyclophenylalanyltryptophenyl. The N-methyltransferase dtpB is responsible for the N-methylation of cyclophenylalanyltryptophenyl to yield cyclo-N-methylphenylalanyltryptophenyl. The cytochrome P450 monooxygenase is responsible not only for pyrroloindole ring formation but also for concurrent dimerization of N-methylphenylalanyltryptophanyl diketopiperazine monomers into a homodimeric product. In Aspergillus flavus (strain ATCC 200026 / FGSC A1120 / IAM 13836 / NRRL 3357 / JCM 12722 / SRRC 167), this protein is Nonribosomal peptide synthetase dtpA.